The chain runs to 308 residues: Probable inositol oxygenase (308 aa).

Substrate contacts are provided by residues arginine 49 and 106–108 (DDS). Residues histidine 119, histidine 144, and aspartate 145 each contribute to the Fe cation site. Substrate contacts are provided by residues lysine 148 and 165–166 (GD). Residues histidine 217, histidine 243, and aspartate 276 each contribute to the Fe cation site. 243-244 (HS) provides a ligand contact to substrate.

Belongs to the myo-inositol oxygenase family. Fe cation serves as cofactor.

It localises to the cytoplasm. The catalysed reaction is myo-inositol + O2 = D-glucuronate + H2O + H(+). It functions in the pathway polyol metabolism; myo-inositol degradation into D-glucuronate; D-glucuronate from myo-inositol: step 1/1. In terms of biological role, involved in the biosynthesis of UDP-glucuronic acid (UDP-GlcA), providing nucleotide sugars for cell-wall polymers. May be also involved in plant ascorbate biosynthesis. The protein is Probable inositol oxygenase of Oryza sativa subsp. japonica (Rice).